The primary structure comprises 68 residues: Toxin Cg2 (68 aa).

Residues 1–66 form the LCN-type CS-alpha/beta domain; it reads KDGYLVNKST…VYPIPGKTCS (66 aa). Intrachain disulfides connect Cys-12/Cys-65, Cys-16/Cys-41, Cys-25/Cys-46, and Cys-29/Cys-48.

Belongs to the long (4 C-C) scorpion toxin superfamily. Sodium channel inhibitor family. As to expression, expressed by the venom gland.

Its subcellular location is the secreted. Binds to sodium channels (Nav) and inhibits them. This chain is Toxin Cg2, found in Centruroides gracilis (Slenderbrown scorpion).